Reading from the N-terminus, the 181-residue chain is Peptide deformylase 1 (181 aa).

Fe cation-binding residues include Cys-106 and His-148. Glu-149 is an active-site residue. His-152 contributes to the Fe cation binding site.

It belongs to the polypeptide deformylase family. Requires Fe(2+) as cofactor.

The catalysed reaction is N-terminal N-formyl-L-methionyl-[peptide] + H2O = N-terminal L-methionyl-[peptide] + formate. In terms of biological role, removes the formyl group from the N-terminal Met of newly synthesized proteins. Requires at least a dipeptide for an efficient rate of reaction. N-terminal L-methionine is a prerequisite for activity but the enzyme has broad specificity at other positions. The polypeptide is Peptide deformylase 1 (Burkholderia multivorans (strain ATCC 17616 / 249)).